A 218-amino-acid chain; its full sequence is Nucleoid occlusion factor SlmA (218 aa).

Residues 30 to 90 enclose the HTH tetR-type domain; it reads ERRQQVLTVL…ALIEHIESTL (61 aa). A DNA-binding region (H-T-H motif) is located at residues 53-72; the sequence is TTARLAKEVGVSEAALYRYF.

This sequence belongs to the nucleoid occlusion factor SlmA family. Homodimer. Interacts with FtsZ.

It localises to the cytoplasm. It is found in the nucleoid. Required for nucleoid occlusion (NO) phenomenon, which prevents Z-ring formation and cell division over the nucleoid. Acts as a DNA-associated cell division inhibitor that binds simultaneously chromosomal DNA and FtsZ, and disrupts the assembly of FtsZ polymers. SlmA-DNA-binding sequences (SBS) are dispersed on non-Ter regions of the chromosome, preventing FtsZ polymerization at these regions. In Haemophilus influenzae (strain PittGG), this protein is Nucleoid occlusion factor SlmA.